Consider the following 385-residue polypeptide: UPF0284 protein PMT9312_0438 (385 aa).

This sequence belongs to the UPF0284 family.

The chain is UPF0284 protein PMT9312_0438 from Prochlorococcus marinus (strain MIT 9312).